We begin with the raw amino-acid sequence, 144 residues long: Cystatin-F (144 aa).

The signal sequence occupies residues 1 to 18 (MWLAILLALCCLTSDTHG). N61 is a glycosylation site (N-linked (GlcNAc...) asparagine). A Secondary area of contact motif is present at residues 80 to 84 (QVVKG). Disulfide bonds link C98-C109 and C123-C143.

Belongs to the cystatin family.

It localises to the secreted. Inhibits papain and cathepsin L but with affinities lower than other cystatins. May play a role in immune regulation through inhibition of a unique target in the hematopoietic system. The sequence is that of Cystatin-F (Cst7) from Mus musculus (Mouse).